Here is a 385-residue protein sequence, read N- to C-terminus: 1-deoxy-D-xylulose 5-phosphate reductoisomerase (385 aa).

NADPH-binding residues include T10, G11, S12, I13, and N124. A 1-deoxy-D-xylulose 5-phosphate-binding site is contributed by K125. E126 is an NADPH binding site. D150 provides a ligand contact to Mn(2+). 1-deoxy-D-xylulose 5-phosphate is bound by residues S151, E152, S176, and H199. Mn(2+) is bound at residue E152. G205 provides a ligand contact to NADPH. Positions 212, 217, 218, and 221 each coordinate 1-deoxy-D-xylulose 5-phosphate. A Mn(2+)-binding site is contributed by E221.

The protein belongs to the DXR family. The cofactor is Mg(2+). Mn(2+) is required as a cofactor.

It catalyses the reaction 2-C-methyl-D-erythritol 4-phosphate + NADP(+) = 1-deoxy-D-xylulose 5-phosphate + NADPH + H(+). It participates in isoprenoid biosynthesis; isopentenyl diphosphate biosynthesis via DXP pathway; isopentenyl diphosphate from 1-deoxy-D-xylulose 5-phosphate: step 1/6. Its function is as follows. Catalyzes the NADPH-dependent rearrangement and reduction of 1-deoxy-D-xylulose-5-phosphate (DXP) to 2-C-methyl-D-erythritol 4-phosphate (MEP). The polypeptide is 1-deoxy-D-xylulose 5-phosphate reductoisomerase (Clostridium botulinum (strain Alaska E43 / Type E3)).